Here is a 421-residue protein sequence, read N- to C-terminus: Exoskeleton protein RP43 (421 aa).

Residues 1-24 form the signal peptide; that stretch reads MRVIFVISLVSFMFVTWQTNPVHC. 6 cysteine pairs are disulfide-bonded: C72-C104, C132-C154, C193-C219, C247-C269, C309-C335, and C362-C384. CUB domains follow at residues 72-191, 193-306, and 309-421; these read CSKP…YSIV, CNSL…YSVP, and CSVV…YTTG.

Detected in vestimentum and trunk but not in opisthosome or obturaculum. In the vestimentum, expression is restricted to epithelial cells under apical cuticular plaques.

In terms of biological role, may play a role in protein-protein interactions during tube assembly. The polypeptide is Exoskeleton protein RP43 (Riftia pachyptila (Vent tube worm)).